Here is a 949-residue protein sequence, read N- to C-terminus: Isoleucine--tRNA ligase (949 aa).

The short motif at Pro58 to His68 is the 'HIGH' region element. An L-isoleucyl-5'-AMP-binding site is contributed by Glu567. Positions Lys608–Ser612 match the 'KMSKS' region motif. Lys611 serves as a coordination point for ATP. Residues Cys912, Cys915, Cys932, and Cys935 each coordinate Zn(2+).

The protein belongs to the class-I aminoacyl-tRNA synthetase family. IleS type 1 subfamily. In terms of assembly, monomer. Zn(2+) serves as cofactor.

The protein resides in the cytoplasm. The enzyme catalyses tRNA(Ile) + L-isoleucine + ATP = L-isoleucyl-tRNA(Ile) + AMP + diphosphate. Catalyzes the attachment of isoleucine to tRNA(Ile). As IleRS can inadvertently accommodate and process structurally similar amino acids such as valine, to avoid such errors it has two additional distinct tRNA(Ile)-dependent editing activities. One activity is designated as 'pretransfer' editing and involves the hydrolysis of activated Val-AMP. The other activity is designated 'posttransfer' editing and involves deacylation of mischarged Val-tRNA(Ile). The protein is Isoleucine--tRNA ligase of Vibrio cholerae serotype O1 (strain ATCC 39315 / El Tor Inaba N16961).